The following is a 354-amino-acid chain: Chorismate synthase (354 aa).

Arg-48 serves as a coordination point for NADP(+). FMN contacts are provided by residues Arg-125 to Ser-127, Gly-277, Lys-292 to Ser-296, and Arg-318.

The protein belongs to the chorismate synthase family. In terms of assembly, homotetramer. The cofactor is FMNH2.

It carries out the reaction 5-O-(1-carboxyvinyl)-3-phosphoshikimate = chorismate + phosphate. It functions in the pathway metabolic intermediate biosynthesis; chorismate biosynthesis; chorismate from D-erythrose 4-phosphate and phosphoenolpyruvate: step 7/7. In terms of biological role, catalyzes the anti-1,4-elimination of the C-3 phosphate and the C-6 proR hydrogen from 5-enolpyruvylshikimate-3-phosphate (EPSP) to yield chorismate, which is the branch point compound that serves as the starting substrate for the three terminal pathways of aromatic amino acid biosynthesis. This reaction introduces a second double bond into the aromatic ring system. The protein is Chorismate synthase of Nitratidesulfovibrio vulgaris (strain DP4) (Desulfovibrio vulgaris).